We begin with the raw amino-acid sequence, 955 residues long: Isoleucine--tRNA ligase (955 aa).

The short motif at Pro-60–His-70 is the 'HIGH' region element. Glu-563 is an L-isoleucyl-5'-AMP binding site. The short motif at Lys-604–Ser-608 is the 'KMSKS' region element. Lys-607 lines the ATP pocket. Positions 926, 929, 946, and 949 each coordinate Zn(2+).

It belongs to the class-I aminoacyl-tRNA synthetase family. IleS type 1 subfamily. As to quaternary structure, monomer. Requires Zn(2+) as cofactor.

It is found in the cytoplasm. The enzyme catalyses tRNA(Ile) + L-isoleucine + ATP = L-isoleucyl-tRNA(Ile) + AMP + diphosphate. In terms of biological role, catalyzes the attachment of isoleucine to tRNA(Ile). As IleRS can inadvertently accommodate and process structurally similar amino acids such as valine, to avoid such errors it has two additional distinct tRNA(Ile)-dependent editing activities. One activity is designated as 'pretransfer' editing and involves the hydrolysis of activated Val-AMP. The other activity is designated 'posttransfer' editing and involves deacylation of mischarged Val-tRNA(Ile). This is Isoleucine--tRNA ligase from Cyanothece sp. (strain PCC 7425 / ATCC 29141).